The following is a 388-amino-acid chain: Succinate--CoA ligase [ADP-forming] subunit beta (388 aa).

One can recognise an ATP-grasp domain in the interval 9–244 (KKLFAEYGLP…PSQDDPREAH (236 aa)). Residues K46, 53 to 55 (GRG), E99, T102, and E107 each bind ATP. Residues N199 and D213 each coordinate Mg(2+). Residues N264 and 321–323 (GIV) each bind substrate.

The protein belongs to the succinate/malate CoA ligase beta subunit family. As to quaternary structure, heterotetramer of two alpha and two beta subunits. Mg(2+) serves as cofactor.

The enzyme catalyses succinate + ATP + CoA = succinyl-CoA + ADP + phosphate. It catalyses the reaction GTP + succinate + CoA = succinyl-CoA + GDP + phosphate. It functions in the pathway carbohydrate metabolism; tricarboxylic acid cycle; succinate from succinyl-CoA (ligase route): step 1/1. Succinyl-CoA synthetase functions in the citric acid cycle (TCA), coupling the hydrolysis of succinyl-CoA to the synthesis of either ATP or GTP and thus represents the only step of substrate-level phosphorylation in the TCA. The beta subunit provides nucleotide specificity of the enzyme and binds the substrate succinate, while the binding sites for coenzyme A and phosphate are found in the alpha subunit. This is Succinate--CoA ligase [ADP-forming] subunit beta from Aeromonas salmonicida (strain A449).